Reading from the N-terminus, the 260-residue chain is MVKEKDKPKNEIIIETENLNLFYTDFKALNEINIKILKNSITALIGPSGCGKSTFLRTLNRMNDLVEGIKIEGNVIYEGKNIYSNNFDILELRRKIGMVFQTPNPFLMSIYDNISYGPKIHGTKDKKKLDEIVEQSLKKSALWDEVKDKLNTNALSLSGGQQQRLCIARTLAIEPNVILMDEPTSALDPISTGKIEELIINLKESYTIIIVTHNMQQAGRISDRTAFFLNGCIEEESPTDELFFNPKNTKTEEYISGKFG.

The ABC transporter domain occupies 14–255 (IETENLNLFY…PKNTKTEEYI (242 aa)). 46–53 (GPSGCGKS) serves as a coordination point for ATP.

It belongs to the ABC transporter superfamily. Phosphate importer (TC 3.A.1.7) family. In terms of assembly, the complex is composed of two ATP-binding proteins (PstB), two transmembrane proteins (PstC and PstA) and a solute-binding protein (PstS).

Its subcellular location is the cell inner membrane. It catalyses the reaction phosphate(out) + ATP + H2O = ADP + 2 phosphate(in) + H(+). Part of the ABC transporter complex PstSACB involved in phosphate import. Responsible for energy coupling to the transport system. The chain is Phosphate import ATP-binding protein PstB from Borreliella afzelii (strain PKo) (Borrelia afzelii).